Here is a 132-residue protein sequence, read N- to C-terminus: Small ribosomal subunit protein eS24 (132 aa).

Over residues 90 to 100 (RLAKHGLYEKK) the composition is skewed to basic and acidic residues. Positions 90–132 (RLAKHGLYEKKKTSRKQRKERKNRMKKVRGTAKANVGAGKKKD) are disordered. The segment covering 101–119 (KTSRKQRKERKNRMKKVRG) has biased composition (basic residues).

The protein belongs to the eukaryotic ribosomal protein eS24 family. Component of the small ribosomal subunit. Part of the small subunit (SSU) processome, composed of more than 70 proteins and the RNA chaperone small nucleolar RNA (snoRNA) U3.

The protein localises to the cytoplasm. Its subcellular location is the nucleus. It is found in the nucleolus. Component of the small ribosomal subunit. The ribosome is a large ribonucleoprotein complex responsible for the synthesis of proteins in the cell. Required for processing of pre-rRNA and maturation of 40S ribosomal subunits. Part of the small subunit (SSU) processome, first precursor of the small eukaryotic ribosomal subunit. During the assembly of the SSU processome in the nucleolus, many ribosome biogenesis factors, an RNA chaperone and ribosomal proteins associate with the nascent pre-rRNA and work in concert to generate RNA folding, modifications, rearrangements and cleavage as well as targeted degradation of pre-ribosomal RNA by the RNA exosome. The sequence is that of Small ribosomal subunit protein eS24 (rps24) from Xenopus laevis (African clawed frog).